The following is a 392-amino-acid chain: Chorismate synthase (392 aa).

Arginine 40 and arginine 46 together coordinate NADP(+). FMN contacts are provided by residues 129 to 131, 257 to 258, glycine 302, 317 to 321, and arginine 343; these read RSS, QA, and KPIAT.

This sequence belongs to the chorismate synthase family. As to quaternary structure, homotetramer. Requires FMNH2 as cofactor.

It catalyses the reaction 5-O-(1-carboxyvinyl)-3-phosphoshikimate = chorismate + phosphate. It functions in the pathway metabolic intermediate biosynthesis; chorismate biosynthesis; chorismate from D-erythrose 4-phosphate and phosphoenolpyruvate: step 7/7. Catalyzes the anti-1,4-elimination of the C-3 phosphate and the C-6 proR hydrogen from 5-enolpyruvylshikimate-3-phosphate (EPSP) to yield chorismate, which is the branch point compound that serves as the starting substrate for the three terminal pathways of aromatic amino acid biosynthesis. This reaction introduces a second double bond into the aromatic ring system. This is Chorismate synthase from Chloroherpeton thalassium (strain ATCC 35110 / GB-78).